We begin with the raw amino-acid sequence, 119 residues long: uncharacterized protein (119 aa).

The next 2 helical transmembrane spans lie at I52–I72 and V88–I108.

It localises to the membrane. This is an uncharacterized protein from Dictyostelium discoideum (Social amoeba).